A 456-amino-acid chain; its full sequence is Two pore potassium channel c (456 aa).

Positions 1–19 (MDTEPLLSPLSPSPHLLHP) are enriched in low complexity. A disordered region spans residues 1–112 (MDTEPLLSPL…PPSLFDFIGG (112 aa)). Residues 1-152 (MDTEPLLSPL…RNPPPPPRRP (152 aa)) are Cytoplasmic-facing. Over residues 52-67 (HPPPPPPPPPPPPPPP) the composition is skewed to pro residues. The helical transmembrane segment at 153 to 173 (AIVLHAFLFLLAYLAMGVTFY) threads the bilayer. An intramembrane region (pore-forming) is located at residues 192–211 (DALYFCIVTLCTIGYGDITP). Residues 223 to 243 (FVLIGFGFVDILLSGMVSYVL) traverse the membrane as a helical segment. Over 244–279 (DLQEHLLITALKNPRSVRKHRHNYIFDLKKGRMRVR) the chain is Cytoplasmic. A helical membrane pass occupies residues 280-300 (MKVALALTVVAICVGVGAAVL). The pore-forming intramembrane region spans 310–329 (DAVYLAVMSVTTVGYGDHAF). Residues 336–356 (LFASAWLLVSTLAVARAFLYL) traverse the membrane as a helical segment. Residues 357 to 456 (AEMRIDKRHR…LNEKKKGKKS (100 aa)) are Cytoplasmic-facing. 2 consecutive EF-hand domains span residues 373 to 408 (LSRD…EMGK) and 412 to 447 (KDIM…VTDL). The Ca(2+) site is built by aspartate 386, aspartate 388, asparagine 390, tyrosine 392, glutamate 397, aspartate 425, lysine 431, and aspartate 436.

It belongs to the two pore domain potassium channel (TC 1.A.1.7) family. Homodimer.

It localises to the membrane. Functionally, inward-rectifying potassium channel. This chain is Two pore potassium channel c (TPKC), found in Oryza sativa subsp. japonica (Rice).